A 242-amino-acid chain; its full sequence is Biosynthetic peptidoglycan transglycosylase (242 aa).

Residues 12–32 (LLLWLIALSVLLVLLLRWVPP) form a helical membrane-spanning segment.

It belongs to the glycosyltransferase 51 family.

The protein localises to the cell inner membrane. It carries out the reaction [GlcNAc-(1-&gt;4)-Mur2Ac(oyl-L-Ala-gamma-D-Glu-L-Lys-D-Ala-D-Ala)](n)-di-trans,octa-cis-undecaprenyl diphosphate + beta-D-GlcNAc-(1-&gt;4)-Mur2Ac(oyl-L-Ala-gamma-D-Glu-L-Lys-D-Ala-D-Ala)-di-trans,octa-cis-undecaprenyl diphosphate = [GlcNAc-(1-&gt;4)-Mur2Ac(oyl-L-Ala-gamma-D-Glu-L-Lys-D-Ala-D-Ala)](n+1)-di-trans,octa-cis-undecaprenyl diphosphate + di-trans,octa-cis-undecaprenyl diphosphate + H(+). The protein operates within cell wall biogenesis; peptidoglycan biosynthesis. Peptidoglycan polymerase that catalyzes glycan chain elongation from lipid-linked precursors. The chain is Biosynthetic peptidoglycan transglycosylase from Stutzerimonas stutzeri (strain A1501) (Pseudomonas stutzeri).